The sequence spans 183 residues: Dual-action ribosomal maturation protein DarP (183 aa).

It belongs to the DarP family.

The protein localises to the cytoplasm. Member of a network of 50S ribosomal subunit biogenesis factors which assembles along the 30S-50S interface, preventing incorrect 23S rRNA structures from forming. Promotes peptidyl transferase center (PTC) maturation. The protein is Dual-action ribosomal maturation protein DarP of Escherichia coli O7:K1 (strain IAI39 / ExPEC).